We begin with the raw amino-acid sequence, 510 residues long: ATP synthase subunit alpha (510 aa).

171 to 178 (GDRQTGKT) contacts ATP.

The protein belongs to the ATPase alpha/beta chains family. In terms of assembly, F-type ATPases have 2 components, CF(1) - the catalytic core - and CF(0) - the membrane proton channel. CF(1) has five subunits: alpha(3), beta(3), gamma(1), delta(1), epsilon(1). CF(0) has three main subunits: a(1), b(2) and c(9-12). The alpha and beta chains form an alternating ring which encloses part of the gamma chain. CF(1) is attached to CF(0) by a central stalk formed by the gamma and epsilon chains, while a peripheral stalk is formed by the delta and b chains.

The protein resides in the cell inner membrane. It carries out the reaction ATP + H2O + 4 H(+)(in) = ADP + phosphate + 5 H(+)(out). Produces ATP from ADP in the presence of a proton gradient across the membrane. The alpha chain is a regulatory subunit. The protein is ATP synthase subunit alpha of Phenylobacterium zucineum (strain HLK1).